A 255-amino-acid polypeptide reads, in one-letter code: Triosephosphate isomerase (255 aa).

9–11 (NWK) provides a ligand contact to substrate. His96 functions as the Electrophile in the catalytic mechanism. The active-site Proton acceptor is Glu168. Positions 174 and 213 each coordinate substrate.

The protein belongs to the triosephosphate isomerase family. In terms of assembly, homodimer.

It localises to the cytoplasm. The enzyme catalyses D-glyceraldehyde 3-phosphate = dihydroxyacetone phosphate. It functions in the pathway carbohydrate biosynthesis; gluconeogenesis. The protein operates within carbohydrate degradation; glycolysis; D-glyceraldehyde 3-phosphate from glycerone phosphate: step 1/1. Its function is as follows. Involved in the gluconeogenesis. Catalyzes stereospecifically the conversion of dihydroxyacetone phosphate (DHAP) to D-glyceraldehyde-3-phosphate (G3P). In Buchnera aphidicola subsp. Acyrthosiphon pisum (strain APS) (Acyrthosiphon pisum symbiotic bacterium), this protein is Triosephosphate isomerase.